Here is a 420-residue protein sequence, read N- to C-terminus: Serine hydroxymethyltransferase (420 aa).

(6S)-5,6,7,8-tetrahydrofolate contacts are provided by residues L121 and G125–L127. Residue K229 is modified to N6-(pyridoxal phosphate)lysine. A (6S)-5,6,7,8-tetrahydrofolate-binding site is contributed by S355–F357.

The protein belongs to the SHMT family. In terms of assembly, homodimer. The cofactor is pyridoxal 5'-phosphate.

Its subcellular location is the cytoplasm. The catalysed reaction is (6R)-5,10-methylene-5,6,7,8-tetrahydrofolate + glycine + H2O = (6S)-5,6,7,8-tetrahydrofolate + L-serine. Its pathway is one-carbon metabolism; tetrahydrofolate interconversion. It participates in amino-acid biosynthesis; glycine biosynthesis; glycine from L-serine: step 1/1. Catalyzes the reversible interconversion of serine and glycine with tetrahydrofolate (THF) serving as the one-carbon carrier. This reaction serves as the major source of one-carbon groups required for the biosynthesis of purines, thymidylate, methionine, and other important biomolecules. Also exhibits THF-independent aldolase activity toward beta-hydroxyamino acids, producing glycine and aldehydes, via a retro-aldol mechanism. This chain is Serine hydroxymethyltransferase, found in Chromohalobacter salexigens (strain ATCC BAA-138 / DSM 3043 / CIP 106854 / NCIMB 13768 / 1H11).